A 786-amino-acid chain; its full sequence is Diamine oxidase [copper-containing] 1, peroxisomal (786 aa).

Residue 419-430 (AFDAGEDGLGKN) coordinates substrate. The active-site Proton acceptor is D421. Residues C440 and C466 are joined by a disulfide bond. 502-507 (VANYEY) contributes to the substrate binding site. The active-site Schiff-base intermediate with substrate; via topaquinone is the Y505. Y505 is modified (2',4',5'-topaquinone). Residues H555 and H557 each coordinate Cu cation. Mn(2+) is bound by residues D710 and I711. A Cu cation-binding site is contributed by H721.

Belongs to the copper/topaquinone oxidase family. Homodimer. Requires Cu cation as cofactor. Zn(2+) serves as cofactor. The cofactor is L-topaquinone. Post-translationally, topaquinone (TPQ) is generated by copper-dependent autoxidation of a specific tyrosyl residue. As to expression, mainly expressed in roots, and, to a lower extent, in leaves and stems.

The protein resides in the peroxisome. It catalyses the reaction a primary methyl amine + O2 + H2O = an aldehyde + H2O2 + NH4(+). It carries out the reaction N-methylputrescine + O2 + H2O = 4-methylaminobutanal + H2O2 + NH4(+). The protein operates within alkaloid biosynthesis; nicotine biosynthesis. Its pathway is amine and polyamine degradation; putrescine degradation. Functionally, involved in putrescine catabolism in peroxisomes. May also be involved in the biosynthesis of pyridine alkaloid natural products, leading mainly to the production of anabasine, anatabine, nicotine and nornicotine, effective deterrents against herbivores with antiparasitic and pesticide properties (neurotoxins); nornicotine serves as the precursor in the synthesis of the carcinogen compound N'-nitrosonornicotine (NNN). Oxidizes preferentially non-N-methylated amines. The chain is Diamine oxidase [copper-containing] 1, peroxisomal from Nicotiana tabacum (Common tobacco).